The primary structure comprises 205 residues: SREBP regulating gene protein (205 aa).

Over 1–16 (MVPCGAVLWRRLLRKR) the chain is Cytoplasmic. A helical membrane pass occupies residues 17 to 35 (WVLGVVFGLSLVYFLSSTF). Over 36–205 (KQEERTVRDR…GEYPPELLPV (170 aa)) the chain is Lumenal. An N-linked (GlcNAc...) asparagine glycan is attached at Asn67.

It belongs to the SPRING family.

The protein resides in the golgi apparatus membrane. Functionally, positively regulates hepatic SREBP signaling pathway by modulating the proper localization of SCAP (SREBP cleavage-activating protein) to the endoplasmic reticulum, thereby controlling the level of functional SCAP. This Gallus gallus (Chicken) protein is SREBP regulating gene protein.